Reading from the N-terminus, the 117-residue chain is Immunoglobulin lambda variable 1-47 (117 aa).

An N-terminal signal peptide occupies residues 1–19 (MAGFPLLLTLLTHCAGSWA). The residue at position 20 (Gln-20) is a Pyrrolidone carboxylic acid. The tract at residues 20–44 (QSVLTQPPSASGTPGQRVTISCSGS) is framework-1. The region spanning 20–117 (QSVLTQPPSA…CAAWDDSLSG (98 aa)) is the Ig-like domain. The cysteines at positions 41 and 108 are disulfide-linked. Residues 45–52 (SSNIGSNY) form a complementarity-determining-1 region. The interval 53-69 (VYWYQQLPGTAPKLLIY) is framework-2. Residues 70–72 (SNN) are complementarity-determining-2. The framework-3 stretch occupies residues 73–108 (QRPSGVPDRFSGSKSGTSASLAISGLRSEDEADYYC). The segment at 109–117 (AAWDDSLSG) is complementarity-determining-3.

As to quaternary structure, immunoglobulins are composed of two identical heavy chains and two identical light chains; disulfide-linked.

It is found in the secreted. The protein localises to the cell membrane. In terms of biological role, v region of the variable domain of immunoglobulin light chains that participates in the antigen recognition. Immunoglobulins, also known as antibodies, are membrane-bound or secreted glycoproteins produced by B lymphocytes. In the recognition phase of humoral immunity, the membrane-bound immunoglobulins serve as receptors which, upon binding of a specific antigen, trigger the clonal expansion and differentiation of B lymphocytes into immunoglobulins-secreting plasma cells. Secreted immunoglobulins mediate the effector phase of humoral immunity, which results in the elimination of bound antigens. The antigen binding site is formed by the variable domain of one heavy chain, together with that of its associated light chain. Thus, each immunoglobulin has two antigen binding sites with remarkable affinity for a particular antigen. The variable domains are assembled by a process called V-(D)-J rearrangement and can then be subjected to somatic hypermutations which, after exposure to antigen and selection, allow affinity maturation for a particular antigen. The sequence is that of Immunoglobulin lambda variable 1-47 from Homo sapiens (Human).